We begin with the raw amino-acid sequence, 511 residues long: Vesicular acetylcholine transporter (511 aa).

The Cytoplasmic segment spans residues 1–36 (MAVGQAKAAMGKISSAIGERSKRISGAMNEPRRKRK). A helical transmembrane segment spans residues 37 to 57 (ILLVIVCIAMLLDNMLYMVIV). Over 58-108 (PIIPNYLETIRTYKLVYITTPSNGTNGSLLNSTQRAVLERNPNANEDIQIG) the chain is Lumenal, vesicle. Asn80, Asn83, and Asn88 each carry an N-linked (GlcNAc...) asparagine glycan. A helical membrane pass occupies residues 109–129 (VLFASKAILQLLSNPFTGTFI). Over 130 to 135 (DRVGYD) the chain is Cytoplasmic. Residues 136–156 (IPLLIGLTIMFFSTITFAFGE) traverse the membrane as a helical segment. At 157–165 (SYAILFAAR) the chain is on the lumenal, vesicle side. The helical transmembrane segment at 166-186 (SLQGLGSAFADTSGIAMIADK) threads the bilayer. Topologically, residues 187–197 (YTEESERTQAL) are cytoplasmic. A helical transmembrane segment spans residues 198–218 (GIALAFISFGSLVAPPFGGVL). Residues 219–225 (YQFAGKW) lie on the Lumenal, vesicle side of the membrane. Residues 226–246 (VPFLVLSFVCLLDGILLLMVV) traverse the membrane as a helical segment. Residues 247-267 (TPFASRTRVNTLQGTPIYKLM) are Cytoplasmic-facing. A helical transmembrane segment spans residues 268-288 (IDPYIAVVAGALTTCNIPLAF). Topologically, residues 289–306 (LEPTISNWMKKTMNASEW) are lumenal, vesicle. A glycan (N-linked (GlcNAc...) asparagine) is linked at Asn302. The helical transmembrane segment at 307 to 327 (QMGITWLPAFFPHILGVYITV) threads the bilayer. Over 328-337 (KLAAKYPNYQ) the chain is Cytoplasmic. The chain crosses the membrane as a helical span at residues 338–358 (WLYGAVGLVIIGASSCTIPAC). Over 359 to 363 (RNFEE) the chain is Lumenal, vesicle. A helical transmembrane segment spans residues 364 to 384 (LIIPLCALCFGIALVDTALLP). Residues 385–400 (TLAFLVDIRYVSVYGS) lie on the Cytoplasmic side of the membrane. Residues 401 to 421 (VYAIADISYSVAYALGPIMAG) traverse the membrane as a helical segment. Residues 422–428 (QIVHDLG) lie on the Lumenal, vesicle side of the membrane. The helical transmembrane segment at 429–449 (FVQLNLGMGLVNILYAPGLLF) threads the bilayer. Topologically, residues 450-511 (LRNVCQMKPS…VLSDQEGYSE (62 aa)) are cytoplasmic. The disordered stretch occupies residues 485–511 (EAKEPHGTSSGNHSVHAVLSDQEGYSE).

This sequence belongs to the major facilitator superfamily. Vesicular transporter family. As to expression, high expression in the electric lobe of the brain.

The protein resides in the membrane. Involved in acetylcholine transport into synaptic vesicles. The chain is Vesicular acetylcholine transporter from Torpedo marmorata (Marbled electric ray).